The sequence spans 205 residues: GTP cyclohydrolase-2 (205 aa).

49–53 (RLHSE) is a GTP binding site. C54, C65, and C67 together coordinate Zn(2+). GTP-binding positions include Q70, 92–94 (EGR), and T114. Residue D126 is the Proton acceptor of the active site. Catalysis depends on R128, which acts as the Nucleophile. 2 residues coordinate GTP: T149 and K154.

This sequence belongs to the GTP cyclohydrolase II family. Zn(2+) is required as a cofactor.

The catalysed reaction is GTP + 4 H2O = 2,5-diamino-6-hydroxy-4-(5-phosphoribosylamino)-pyrimidine + formate + 2 phosphate + 3 H(+). The protein operates within cofactor biosynthesis; riboflavin biosynthesis; 5-amino-6-(D-ribitylamino)uracil from GTP: step 1/4. Functionally, catalyzes the conversion of GTP to 2,5-diamino-6-ribosylamino-4(3H)-pyrimidinone 5'-phosphate (DARP), formate and pyrophosphate. This is GTP cyclohydrolase-2 from Pseudomonas aeruginosa (strain UCBPP-PA14).